The chain runs to 715 residues: MEARSMLVPPQASVCFEDVAMAFTQEEWEQLDLAQRTLYREVTLETWEHIVSLGLFLSKSDVISQLEQEEDLCRAEQEAPRDWKATLEENRLNSEKDRAREELSHHVEVYRSGPEEPPSLVLGKVQDQSNQLREHQENSLRFMVLTSERLFAQREHCELELGGGYSLPSTLSLLPTTLPTSTGFPKPNSQVKELKQNSAFINHEKNGADGKHCESHQCARAFCQSIYLSKLGNVETGKKNPYEYIVSGDSLNYGSSLCFHGRTFSVKKSDDCKDYGNLFSHSVSLNEQKPVHFGKSQYECDECRETCSESLCLVQTERSGPGETPFRCEERCAAFPMASSFSDCNIIQTTEKPSVCNQCGKSFSCCKLIHQRTHTGEKPFECTQCGKSFSQSYDLVIHQRTHTGEKPYECDLCGKSFTQRSKLITHQRIHTGEKPYQCIECRKSFRWNSNLIVHQRIHTGEKPYECTHCGKSFSQSYELVTHKRTHTGEKPFKCTQCGKSFSQKYDLVVHQRTHTGEKPYECNLCGKSFSQSSKLITHQRIHTGEKPYQCIECGKSFRWNSNLVIHQRIHTGEKPYDCTHCGKSFSQSYQLVAHKRTHTGEKPYECNECGKAFNRSTQLIRHLQIHTGEKPYKCNQCNKAFARSSYLVMHQRTHTGEKPFECSQCGKAFSGSSNLLSHHRIHSGEKPYECSDCGKSFRQQSQLVVHRRTHTGEKP.

Residues valine 14–alanine 85 form the KRAB domain. Residues lysine 273 and lysine 289 each participate in a glycyl lysine isopeptide (Lys-Gly) (interchain with G-Cter in SUMO2) cross-link. Residues serine 354–histidine 374 form a C2H2-type 1; atypical zinc finger. C2H2-type zinc fingers lie at residues phenylalanine 380–histidine 402, tyrosine 408–histidine 430, tyrosine 436–histidine 458, tyrosine 464–histidine 486, phenylalanine 492–histidine 514, tyrosine 520–histidine 542, tyrosine 548–histidine 570, tyrosine 576–histidine 598, tyrosine 604–histidine 626, tyrosine 632–histidine 654, phenylalanine 660–histidine 682, and tyrosine 688–histidine 710. Lysine 534 participates in a covalent cross-link: Glycyl lysine isopeptide (Lys-Gly) (interchain with G-Cter in SUMO2).

Belongs to the krueppel C2H2-type zinc-finger protein family.

The protein localises to the nucleus. In terms of biological role, may be involved in transcriptional regulation. The sequence is that of Zinc finger protein 544 (ZNF544) from Homo sapiens (Human).